The sequence spans 211 residues: Orotidine 5'-phosphate decarboxylase (211 aa).

Residues Asp7, Lys29, 57-66, Ser109, 162-172, Gly185, and Arg186 contribute to the substrate site; these read DLKLADIPNT and PGIGAQGGSPV. Lys59 (proton donor) is an active-site residue.

It belongs to the OMP decarboxylase family. Type 1 subfamily. In terms of assembly, homodimer.

The enzyme catalyses orotidine 5'-phosphate + H(+) = UMP + CO2. It functions in the pathway pyrimidine metabolism; UMP biosynthesis via de novo pathway; UMP from orotate: step 2/2. Its function is as follows. Catalyzes the decarboxylation of orotidine 5'-monophosphate (OMP) to uridine 5'-monophosphate (UMP). The polypeptide is Orotidine 5'-phosphate decarboxylase (Pyrococcus furiosus (strain ATCC 43587 / DSM 3638 / JCM 8422 / Vc1)).